We begin with the raw amino-acid sequence, 366 residues long: Geranylgeranyl pyrophosphate synthase, chloroplastic/chromoplastic (366 aa).

The tract at residues 44–65 is disordered; sequence KRTVSSSSSSSLITKEDNNLKS. Positions 112, 115, and 144 each coordinate isopentenyl diphosphate. Residues D151 and D157 each coordinate Mg(2+). A dimethylallyl diphosphate-binding site is contributed by R162. R163 is a binding site for isopentenyl diphosphate. The dimethylallyl diphosphate site is built by K251, T252, Q289, K306, and K316.

The protein belongs to the FPP/GGPP synthase family. Dimer. Mg(2+) serves as cofactor.

The protein resides in the plastid. It is found in the chloroplast stroma. The protein localises to the chromoplast. It catalyses the reaction isopentenyl diphosphate + dimethylallyl diphosphate = (2E)-geranyl diphosphate + diphosphate. The catalysed reaction is isopentenyl diphosphate + (2E)-geranyl diphosphate = (2E,6E)-farnesyl diphosphate + diphosphate. The enzyme catalyses isopentenyl diphosphate + (2E,6E)-farnesyl diphosphate = (2E,6E,10E)-geranylgeranyl diphosphate + diphosphate. Its pathway is isoprenoid biosynthesis; farnesyl diphosphate biosynthesis; farnesyl diphosphate from geranyl diphosphate and isopentenyl diphosphate: step 1/1. It functions in the pathway isoprenoid biosynthesis; geranyl diphosphate biosynthesis; geranyl diphosphate from dimethylallyl diphosphate and isopentenyl diphosphate: step 1/1. The protein operates within isoprenoid biosynthesis; geranylgeranyl diphosphate biosynthesis; geranylgeranyl diphosphate from farnesyl diphosphate and isopentenyl diphosphate: step 1/1. In terms of biological role, catalyzes the trans-addition of the three molecules of IPP onto DMAPP to form geranylgeranyl pyrophosphate. This chain is Geranylgeranyl pyrophosphate synthase, chloroplastic/chromoplastic (GGPS1), found in Sinapis alba (White mustard).